The sequence spans 163 residues: UPF0478 protein SERP1299 (163 aa).

A helical membrane pass occupies residues 7–27 (IAGIIAAIAFLILCIGIVVVL).

Belongs to the UPF0478 family.

The protein resides in the cell membrane. This Staphylococcus epidermidis (strain ATCC 35984 / DSM 28319 / BCRC 17069 / CCUG 31568 / BM 3577 / RP62A) protein is UPF0478 protein SERP1299.